We begin with the raw amino-acid sequence, 431 residues long: Histidinol dehydrogenase (431 aa).

NAD(+) is bound by residues Y130, Q191, and N214. The substrate site is built by S237, Q259, and H262. 2 residues coordinate Zn(2+): Q259 and H262. Active-site proton acceptor residues include E327 and H328. Residues H328, D361, E415, and H420 each coordinate substrate. A Zn(2+)-binding site is contributed by D361. A Zn(2+)-binding site is contributed by H420.

Belongs to the histidinol dehydrogenase family. Zn(2+) serves as cofactor.

It catalyses the reaction L-histidinol + 2 NAD(+) + H2O = L-histidine + 2 NADH + 3 H(+). It participates in amino-acid biosynthesis; L-histidine biosynthesis; L-histidine from 5-phospho-alpha-D-ribose 1-diphosphate: step 9/9. Its function is as follows. Catalyzes the sequential NAD-dependent oxidations of L-histidinol to L-histidinaldehyde and then to L-histidine. This chain is Histidinol dehydrogenase, found in Bradyrhizobium diazoefficiens (strain JCM 10833 / BCRC 13528 / IAM 13628 / NBRC 14792 / USDA 110).